The following is a 176-amino-acid chain: MAEVHIIGQIIGASGFPQHSLFCKWGLHTGGAWKLLSGVVEGQTQVDHPQNDDMAFWSHPIDMHFATKGLQGWPKLHLQVWHQDTFGRNELYGYSFLHIPSTPGTHTLLSPTWRPLGTWQEQICQMFVGGGPQLKSASLIYGGSDRYRLQTVAMGQVHLELTVILRNFERYGVESS.

In terms of domain architecture, C2 B9-type spans 2-118 (AEVHIIGQII…LSPTWRPLGT (117 aa)).

It belongs to the B9D family. Part of the tectonic-like complex (also named B9 complex).

It is found in the cytoplasm. The protein resides in the cytoskeleton. The protein localises to the cilium basal body. It localises to the cilium axoneme. Its function is as follows. Component of the tectonic-like complex, a complex localized at the transition zone of primary cilia and acting as a barrier that prevents diffusion of transmembrane proteins between the cilia and plasma membranes. This Xenopus laevis (African clawed frog) protein is B9 domain-containing protein 2 (b9d2).